The sequence spans 218 residues: N-(5'-phosphoribosyl)anthranilate isomerase (218 aa).

It belongs to the TrpF family.

The enzyme catalyses N-(5-phospho-beta-D-ribosyl)anthranilate = 1-(2-carboxyphenylamino)-1-deoxy-D-ribulose 5-phosphate. The protein operates within amino-acid biosynthesis; L-tryptophan biosynthesis; L-tryptophan from chorismate: step 3/5. The polypeptide is N-(5'-phosphoribosyl)anthranilate isomerase (Halalkalibacterium halodurans (strain ATCC BAA-125 / DSM 18197 / FERM 7344 / JCM 9153 / C-125) (Bacillus halodurans)).